The primary structure comprises 198 residues: uncharacterized protein (198 aa).

This is an uncharacterized protein from Caenorhabditis elegans.